The following is a 255-amino-acid chain: tRNA (guanine-N(7)-)-methyltransferase (255 aa).

Residues 1–21 form a disordered region; that stretch reads MMHDDPNEAGLPPHDDAIPDE. S-adenosyl-L-methionine is bound by residues Glu86, Glu111, Asp138, and Asp161. Residue Asp161 is part of the active site. Substrate is bound by residues Lys165, Asp197, and 232 to 235; that span reads TKFE.

Belongs to the class I-like SAM-binding methyltransferase superfamily. TrmB family.

It carries out the reaction guanosine(46) in tRNA + S-adenosyl-L-methionine = N(7)-methylguanosine(46) in tRNA + S-adenosyl-L-homocysteine. The protein operates within tRNA modification; N(7)-methylguanine-tRNA biosynthesis. Functionally, catalyzes the formation of N(7)-methylguanine at position 46 (m7G46) in tRNA. This is tRNA (guanine-N(7)-)-methyltransferase from Burkholderia lata (strain ATCC 17760 / DSM 23089 / LMG 22485 / NCIMB 9086 / R18194 / 383).